The following is a 263-amino-acid chain: Ret finger protein-like 4B (263 aa).

An RING-type zinc finger spans residues 11 to 53 (CPVCLDFFSCSISLSCTHVFCFDCIQRYILENHDFRAMCPLCR). Residues 76-263 (HNSRLEQSLH…ESGNVLTICP (188 aa)) form the B30.2/SPRY domain.

The chain is Ret finger protein-like 4B (RFPL4B) from Homo sapiens (Human).